Reading from the N-terminus, the 181-residue chain is MRLVLLGPPGAGKGTQAQLLSDALNIPHISTGDLFRANISQGTELGKQAQEYMDAGKLVPTEVTANMVRARLEEADAANGFLLDGFPRTIEQADLLEEMLKEKDLKLDAVINYQVSEDVVVERMLSRGRNDDNESTIRTRLQVYREETAPLIDYYQGRILNIDAEGSVEDISEATLCALDK.

10–15 (GAGKGT) contacts ATP. Residues 30-59 (STGDLFRANISQGTELGKQAQEYMDAGKLV) are NMP. AMP is bound by residues threonine 31, arginine 36, 57 to 59 (KLV), 85 to 88 (GFPR), and glutamine 92. The segment at 126–132 (SRGRNDD) is LID. Arginine 127 contributes to the ATP binding site. AMP is bound by residues arginine 129 and arginine 140. Position 166 (glycine 166) interacts with ATP.

It belongs to the adenylate kinase family. As to quaternary structure, monomer.

The protein localises to the cytoplasm. It catalyses the reaction AMP + ATP = 2 ADP. Its pathway is purine metabolism; AMP biosynthesis via salvage pathway; AMP from ADP: step 1/1. Functionally, catalyzes the reversible transfer of the terminal phosphate group between ATP and AMP. Plays an important role in cellular energy homeostasis and in adenine nucleotide metabolism. The polypeptide is Adenylate kinase (Corynebacterium urealyticum (strain ATCC 43042 / DSM 7109)).